We begin with the raw amino-acid sequence, 1098 residues long: Unconventional myosin-If (1098 aa).

In terms of domain architecture, Myosin motor spans 17–690 (SGVDDMVLLP…SLFLLEEVRE (674 aa)). 110–117 (GESGAGKT) serves as a coordination point for ATP. Positions 579 to 589 (PHYIRCIKPNE) are actin-binding. The 30-residue stretch at 693–722 (FDGFARTIQKAWRRHVAVRKYEEMREEASN) folds into the IQ domain. Positions 728–917 (KERRRNSINR…GRTLTVSVGD (190 aa)) constitute a TH1 domain. 2 disordered regions span residues 913–1009 (VSVG…EFLN) and 1021–1044 (KRSV…THGP). A compositionally biased stretch (basic residues) spans 924-937 (KPTRKGMAKGKPRR). Phosphoserine is present on Ser-1023. One can recognise an SH3 domain in the interval 1041 to 1098 (THGPRCRALYQYVGQDVDELSFNVNEVIEILMEDPSGWWKGRLHGQEGLFPGNYVEKI).

Belongs to the TRAFAC class myosin-kinesin ATPase superfamily. Myosin family.

Functionally, myosins are actin-based motor molecules with ATPase activity. Unconventional myosins serve in intracellular movements. Their highly divergent tails are presumed to bind to membranous compartments, which would be moved relative to actin filaments. The protein is Unconventional myosin-If (MYO1F) of Homo sapiens (Human).